The primary structure comprises 119 residues: Divalent-cation tolerance protein CutA (119 aa).

Residues Cys23, His90, and His91 each contribute to the Cu cation site.

The protein belongs to the CutA family. In terms of assembly, homotrimer. It depends on Cu cation as a cofactor.

The protein localises to the cytoplasm. In terms of biological role, involved in resistance toward heavy metals. This Yersinia pseudotuberculosis serotype O:1b (strain IP 31758) protein is Divalent-cation tolerance protein CutA.